Reading from the N-terminus, the 512-residue chain is Glutamyl-tRNA(Gln) amidotransferase subunit A (512 aa).

Residues Lys-82 and Ser-157 each act as charge relay system in the active site. Ser-181 acts as the Acyl-ester intermediate in catalysis.

The protein belongs to the amidase family. GatA subfamily. As to quaternary structure, heterotrimer of A, B and C subunits.

It catalyses the reaction L-glutamyl-tRNA(Gln) + L-glutamine + ATP + H2O = L-glutaminyl-tRNA(Gln) + L-glutamate + ADP + phosphate + H(+). Its function is as follows. Allows the formation of correctly charged Gln-tRNA(Gln) through the transamidation of misacylated Glu-tRNA(Gln) in organisms which lack glutaminyl-tRNA synthetase. The reaction takes place in the presence of glutamine and ATP through an activated gamma-phospho-Glu-tRNA(Gln). The protein is Glutamyl-tRNA(Gln) amidotransferase subunit A of Bordetella petrii (strain ATCC BAA-461 / DSM 12804 / CCUG 43448).